The primary structure comprises 248 residues: Sperm-specific protein Don juan (248 aa).

A coiled-coil region spans residues 82–147 (KEGNQDELEN…EKKTKCAKKD (66 aa)). Residues 146-200 (KDPCKKKDPCKKKDPCKKKDPCKKKDPCKKKDPCKKKDPCKKKDPCKKKGGDLKK) are disordered. 8 tandem repeats follow at residues 147 to 152 (DPCKKK), 153 to 158 (DPCKKK), 159 to 164 (DPCKKK), 165 to 170 (DPCKKK), 171 to 176 (DPCKKK), 177 to 182 (DPCKKK), 183 to 188 (DPCKKK), and 189 to 194 (DPCKKK). The segment at 147–194 (DPCKKKDPCKKKDPCKKKDPCKKKDPCKKKDPCKKKDPCKKKDPCKKK) is 8 X 6 AA tandem repeat of D-P-C-K-K-K. The stretch at 197–244 (DLKKKCKKLAEKEKCKKLAKKEKMKKLQKKCKKMAQKEKCKKMAKKDK) forms a coiled coil.

Expression limited to post-meiotic male germ cells. Expressed in elongated spermatids during individualization and in finally elongated nuclei of spermatids. After completion of nuclear shaping it is no longer expressed in the sperm heads with the onset of individualization.

The protein localises to the nucleus. It localises to the mitochondrion. Its function is as follows. May be involved in the final steps of mitochondrial differentiation within the flagellum. The protein is Sperm-specific protein Don juan (dj) of Drosophila melanogaster (Fruit fly).